We begin with the raw amino-acid sequence, 212 residues long: Ribonuclease HII (212 aa).

The RNase H type-2 domain occupies 17 to 211 (RVLAGIDEAG…VLELLDLTDS (195 aa)). 3 residues coordinate a divalent metal cation: D23, E24, and D120.

The protein belongs to the RNase HII family. Mn(2+) serves as cofactor. It depends on Mg(2+) as a cofactor.

It localises to the cytoplasm. It catalyses the reaction Endonucleolytic cleavage to 5'-phosphomonoester.. In terms of biological role, endonuclease that specifically degrades the RNA of RNA-DNA hybrids. In Chloroflexus aggregans (strain MD-66 / DSM 9485), this protein is Ribonuclease HII.